Consider the following 413-residue polypeptide: Probable aminotransferase sirI (413 aa).

N6-(pyridoxal phosphate)lysine is present on lysine 255.

It belongs to the class-I pyridoxal-phosphate-dependent aminotransferase family. The cofactor is pyridoxal 5'-phosphate.

It functions in the pathway mycotoxin biosynthesis. In terms of biological role, probable aminotransferase; part of the gene cluster that mediates the biosynthesis of sirodesmin PL, an epipolythiodioxopiperazine (ETP) characterized by a disulfide bridged cyclic dipeptide and that acts as a phytotoxin which is involved in the blackleg didease of canola. SirD catalyzes the O-prenylation of L-tyrosine (L-Tyr) in the presence of dimethylallyl diphosphate (DMAPP) to yield 4-O-dimethylallyl-L-Tyr, and therefore represents probably the first pathway-specific enzyme in the biosynthesis of sirodesmin PL. 4-O-dimethylallyl-L-Tyr, then undergoes condensation with L-Ser in a reaction catalyzed by the non-ribosomal peptide synthase sirP to form the diketopiperazine (DKP) backbone. Further bishydroxylation of the DKP performed by the cytochrome P450 monooxygenase sirC leads to the production of the intermediate phomamide. This step is essential to form the reactive thiol group required for toxicity of sirodesmin PL. The next steps of sirodesmin biosynthesis are not well understood yet, but some predictions could be made from intermediate compounds identification. Phomamide is converted into phomalizarine via oxidation, probably by sirT. Further oxidation, methylation (by sirM or sirN) and reduction steps convert phomalizarine to deacetyl sirodesmin. Finally, acetyltransferase sirH probably acetylates deacetyl sirodesmin to produce sirodesmin PL. The chain is Probable aminotransferase sirI from Leptosphaeria maculans (Blackleg fungus).